We begin with the raw amino-acid sequence, 151 residues long: Transcriptional repressor NrdR (151 aa).

The segment at 3–34 (CPHCGNCDDKVMESRTLAQGDCIRRRRECLAC) is a zinc-finger region. In terms of domain architecture, ATP-cone spans 49–141 (FMVIKKDGRR…VYKQFSNLDE (93 aa)).

This sequence belongs to the NrdR family. Requires Zn(2+) as cofactor.

Functionally, negatively regulates transcription of bacterial ribonucleotide reductase nrd genes and operons by binding to NrdR-boxes. The polypeptide is Transcriptional repressor NrdR (Treponema denticola (strain ATCC 35405 / DSM 14222 / CIP 103919 / JCM 8153 / KCTC 15104)).